The primary structure comprises 174 residues: Male-enhanced antigen 1 (174 aa).

2 disordered regions span residues 1–77 and 94–123; these read MAAV…PVGD and LHLP…IPMD. 3 stretches are compositionally biased toward acidic residues: residues 38–48, 65–77, and 101–110; these read SSEEPEEEQEE, PEQE…PVGD, and LESEDEDEEG. Phosphoserine is present on serine 103.

In terms of biological role, may play an important role in spermatogenesis and/or testis development. This is Male-enhanced antigen 1 (MEA1) from Sus scrofa (Pig).